A 122-amino-acid chain; its full sequence is Large ribosomal subunit protein uL14 (122 aa).

The protein belongs to the universal ribosomal protein uL14 family. In terms of assembly, part of the 50S ribosomal subunit. Forms a cluster with proteins L3 and L19. In the 70S ribosome, L14 and L19 interact and together make contacts with the 16S rRNA in bridges B5 and B8.

Functionally, binds to 23S rRNA. Forms part of two intersubunit bridges in the 70S ribosome. The sequence is that of Large ribosomal subunit protein uL14 from Campylobacter lari (strain RM2100 / D67 / ATCC BAA-1060).